The chain runs to 152 residues: MSPAIAVEIKRLPHAEGLPLPAYQSAHAAGLDLCAANSADAPLSLAPGCHMLVPTGLCIALPPNYEAQVRPRSGLAAKHGVTVLNAPGTIDADYRGEIGVLLINHGKEPFTIRRGERIAQMIIAPVVRAELISVETLSETARGVGGFGSTGR.

Substrate is bound by residues 72-74 (RSG), N85, and 89-91 (TID).

The protein belongs to the dUTPase family. The cofactor is Mg(2+).

The enzyme catalyses dUTP + H2O = dUMP + diphosphate + H(+). It participates in pyrimidine metabolism; dUMP biosynthesis; dUMP from dCTP (dUTP route): step 2/2. Its function is as follows. This enzyme is involved in nucleotide metabolism: it produces dUMP, the immediate precursor of thymidine nucleotides and it decreases the intracellular concentration of dUTP so that uracil cannot be incorporated into DNA. The sequence is that of Deoxyuridine 5'-triphosphate nucleotidohydrolase from Rhodopseudomonas palustris (strain HaA2).